Reading from the N-terminus, the 382-residue chain is Probable protein phosphatase 2C 65 (382 aa).

The region spanning 47–337 (HVSMSIKQGK…DDCAVVVLYL (291 aa)) is the PPM-type phosphatase domain. Residues D83 and G84 each coordinate Mn(2+). The disordered stretch occupies residues 107–126 (KIRSSKSAGDENIENNSSQS). The Mn(2+) site is built by D282 and D328.

It belongs to the PP2C family. It depends on Mg(2+) as a cofactor. Requires Mn(2+) as cofactor.

The enzyme catalyses O-phospho-L-seryl-[protein] + H2O = L-seryl-[protein] + phosphate. It catalyses the reaction O-phospho-L-threonyl-[protein] + H2O = L-threonyl-[protein] + phosphate. The protein is Probable protein phosphatase 2C 65 of Arabidopsis thaliana (Mouse-ear cress).